A 444-amino-acid polypeptide reads, in one-letter code: Phosphoglucosamine mutase (444 aa).

Ser-102 functions as the Phosphoserine intermediate in the catalytic mechanism. Mg(2+) contacts are provided by Ser-102, Asp-241, Asp-243, and Asp-245. Ser-102 is subject to Phosphoserine.

It belongs to the phosphohexose mutase family. It depends on Mg(2+) as a cofactor. Activated by phosphorylation.

It catalyses the reaction alpha-D-glucosamine 1-phosphate = D-glucosamine 6-phosphate. Its function is as follows. Catalyzes the conversion of glucosamine-6-phosphate to glucosamine-1-phosphate. This is Phosphoglucosamine mutase from Buchnera aphidicola subsp. Acyrthosiphon pisum (strain 5A).